A 309-amino-acid chain; its full sequence is MSIRIVPKDQLGKQREKGTTAGNIPPLLFANLKSLYTRRTERLQQLALDNPLADYLDFAAKITEAQQKALHDHPLVLDMQAELVQSAASGKPPLDGSVFPRTEHWRKLLSALIAELRHDAPDHILAVLDNLDKASVHELELYADALLNRDFSQVGSEKAPFIWAALSLYWAQMASQIPGKARAEYGEHRQFCPVCGSIPVSSVVHIGTHNGLRYLHCNLCESEWHVVRIKCSNCEQTRDLNYWSLDSELAAVKAESCGDCGTYLKILYQEKDPQVEAVADDLASLILDAKMEGEGFARSSINPFLFPGE.

The protein belongs to the FdhE family.

The protein localises to the cytoplasm. Its function is as follows. Necessary for formate dehydrogenase activity. The chain is Protein FdhE homolog from Yersinia pestis bv. Antiqua (strain Antiqua).